Consider the following 81-residue polypeptide: ATP synthase subunit c, chloroplastic (81 aa).

2 helical membrane-spanning segments follow: residues 3–23 (PLISSASVIAAGLAVGLASIG) and 57–77 (LAFMEALTIYGLVVALALLFA).

This sequence belongs to the ATPase C chain family. F-type ATPases have 2 components, F(1) - the catalytic core - and F(0) - the membrane proton channel. F(1) has five subunits: alpha(3), beta(3), gamma(1), delta(1), epsilon(1). F(0) has four main subunits: a(1), b(1), b'(1) and c(10-14). The alpha and beta chains form an alternating ring which encloses part of the gamma chain. F(1) is attached to F(0) by a central stalk formed by the gamma and epsilon chains, while a peripheral stalk is formed by the delta, b and b' chains.

Its subcellular location is the plastid. The protein localises to the chloroplast thylakoid membrane. Functionally, f(1)F(0) ATP synthase produces ATP from ADP in the presence of a proton or sodium gradient. F-type ATPases consist of two structural domains, F(1) containing the extramembraneous catalytic core and F(0) containing the membrane proton channel, linked together by a central stalk and a peripheral stalk. During catalysis, ATP synthesis in the catalytic domain of F(1) is coupled via a rotary mechanism of the central stalk subunits to proton translocation. Its function is as follows. Key component of the F(0) channel; it plays a direct role in translocation across the membrane. A homomeric c-ring of between 10-14 subunits forms the central stalk rotor element with the F(1) delta and epsilon subunits. This Ceratophyllum demersum (Rigid hornwort) protein is ATP synthase subunit c, chloroplastic.